Here is a 118-residue protein sequence, read N- to C-terminus: Developmental pluripotency-associated protein 5A (118 aa).

The KH; atypical domain maps to 24-86 (PEVFQVQSLV…NNKIRAKWML (63 aa)).

The protein belongs to the KHDC1 family.

The protein resides in the cytoplasm. Involved in the maintenance of embryonic stem (ES) cell pluripotency. Dispensable for self-renewal of pluripotent ES cells and establishment of germ cells. Associates with specific target mRNAs. This is Developmental pluripotency-associated protein 5A (Dppa5a) from Mus musculus (Mouse).